The following is a 285-amino-acid chain: MLTNSERVKVLSEALPYIQQFSSRIIVIKYGGAAMKNQKLKDQVISDLVFLSFIGLRPILVHGGGPEINFWLDRLKILPKFDDGVRVTDQPTMDIVEMVLVGRVNKDLVATINKQGGKSVGLSGKDGLLITPRPNGKANLGFVGEVQNIDTKLLKILINNNYIPVIASVAADKEGQSYNINADTVAGEIAARLSNAEKLILLTDTPGILRNSSDPSTLISHLNIQEARDLTQTAVISGGMIPKVNCCIRSLAQGVASAHILDGRIDHALLLEILTDQGIGSMLVV.

Substrate is bound by residues 64-65 (GG), R86, and N179.

It belongs to the acetylglutamate kinase family. ArgB subfamily.

Its subcellular location is the plastid. The protein resides in the chloroplast. It catalyses the reaction N-acetyl-L-glutamate + ATP = N-acetyl-L-glutamyl 5-phosphate + ADP. It functions in the pathway amino-acid biosynthesis; L-arginine biosynthesis; N(2)-acetyl-L-ornithine from L-glutamate: step 2/4. Its function is as follows. Catalyzes the ATP-dependent phosphorylation of N-acetyl-L-glutamate. The chain is Acetylglutamate kinase from Pyropia yezoensis (Susabi-nori).